The following is an 847-amino-acid chain: KN motif and ankyrin repeat domain-containing protein 2 (847 aa).

Positions M1–Y32 are disordered. An interaction with AIFM1 region spans residues M1–S72. Phosphoserine is present on residues S19, S83, S86, S89, and S92. At R105 the chain carries Omega-N-methylarginine. Positions L161 to P182 are disordered. T170 carries the phosphothreonine modification. 2 coiled-coil regions span residues L187 to Q207 and E284 to Q311. Phosphothreonine is present on T331. S358 bears the Phosphoserine mark. Disordered regions lie at residues G414–S473 and N502–E581. Pro residues predominate over residues D420 to P433. Low complexity-rich tracts occupy residues Y434–A446 and E506–E516. Phosphoserine is present on S536. The ANK 0; degenerate repeat unit spans residues R610–M647. 5 ANK repeats span residues N662–K692, A696–A729, A734–M763, D767–L797, and D801–F831. An interaction with NCOA1 region spans residues T665–F831.

Interacts (non-phosphorylated form) with NCOA1; NCOA2 AND NCOA3. Interacts with AIFM1. Interacts with ARHGDIA; the interaction is direct and may regulate the interaction of ARHGDIA with RHOA, RAC1 and CDC42. Interacts (via ANK repeats 1-5) with KIF21A. Phosphorylated by casein kinase II upon estrogen stimulation. Phosphorylation induces the release by KANK2 of NCOA1 and its translocation to the nucleus where NCOA1 can activate gene transcription. In terms of tissue distribution, expressed by podocytes in kidney glomeruli (at protein level).

The protein resides in the cytoplasm. Its subcellular location is the mitochondrion. Involved in transcription regulation by sequestering in the cytoplasm nuclear receptor coactivators such as NCOA1, NCOA2 and NCOA3. Involved in regulation of caspase-independent apoptosis by sequestering the proapoptotic factor AIFM1 in mitochondria. Pro-apoptotic stimuli can induce its proteasomal degradation allowing the translocation of AIFM1 to the nucleus to induce apoptosis. Involved in the negative control of vitamin D receptor signaling pathway. Involved in actin stress fibers formation through its interaction with ARHGDIA and the regulation of the Rho signaling pathway. May thereby play a role in cell adhesion and migration, regulating for instance podocytes migration during development of the kidney. Through the Rho signaling pathway may also regulate cell proliferation. The protein is KN motif and ankyrin repeat domain-containing protein 2 of Rattus norvegicus (Rat).